Consider the following 351-residue polypeptide: Uroporphyrinogen decarboxylase (351 aa).

Substrate contacts are provided by residues 25–29, D74, Y151, S206, and H325; that span reads RQAGR.

This sequence belongs to the uroporphyrinogen decarboxylase family. Homodimer.

Its subcellular location is the cytoplasm. The enzyme catalyses uroporphyrinogen III + 4 H(+) = coproporphyrinogen III + 4 CO2. It functions in the pathway porphyrin-containing compound metabolism; protoporphyrin-IX biosynthesis; coproporphyrinogen-III from 5-aminolevulinate: step 4/4. Functionally, catalyzes the decarboxylation of four acetate groups of uroporphyrinogen-III to yield coproporphyrinogen-III. This is Uroporphyrinogen decarboxylase from Chlorobaculum parvum (strain DSM 263 / NCIMB 8327) (Chlorobium vibrioforme subsp. thiosulfatophilum).